The chain runs to 240 residues: Ribonuclease HII (240 aa).

Positions 33 to 222 constitute an RNase H type-2 domain; the sequence is GPVAGVDEVG…VRRIVTRSNT (190 aa). Positions 39, 40, and 131 each coordinate a divalent metal cation.

The protein belongs to the RNase HII family. The cofactor is Mn(2+). Mg(2+) is required as a cofactor.

The protein resides in the cytoplasm. It carries out the reaction Endonucleolytic cleavage to 5'-phosphomonoester.. Functionally, endonuclease that specifically degrades the RNA of RNA-DNA hybrids. The chain is Ribonuclease HII from Mycobacterium leprae (strain Br4923).